The following is a 791-amino-acid chain: Metabotropic glutamate receptor-like protein D (791 aa).

A signal peptide spans 1–22 (MKINSFLIILILLFISIKNSNG). At 23–390 (EPEKKFKLIT…TEVYQSRPIQ (368 aa)) the chain is on the extracellular side. Asn-72, Asn-168, Asn-279, Asn-290, Asn-306, and Asn-349 each carry an N-linked (GlcNAc...) asparagine glycan. Residues 391–411 (IAISSISSFFIVTVLVMMGLV) form a helical membrane-spanning segment. Residues 412–424 (VRFRKNPSIRSAS) are Cytoplasmic-facing. The helical transmembrane segment at 425 to 445 (PIFLNFILFGALIIYVGIIIW) threads the bilayer. Over 446–453 (SSSINSAS) the chain is Extracellular. Residues 454–474 (CNAQFWLVTLGFTTLIGSLVV) traverse the membrane as a helical segment. The Cytoplasmic portion of the chain corresponds to 475–495 (KNVRIWLIFDNPELKLVKITN). Residues 496–516 (LQLVPWVGVCLVINIILMSIL) form a helical membrane-spanning segment. The Extracellular portion of the chain corresponds to 517 to 550 (TSVGDLREVNAQGIDSLGKYEFMRICKMNSSGAS). N-linked (GlcNAc...) asparagine glycosylation occurs at Asn-545. Residues 551 to 571 (TLYTILAYFAALLLIGVFVSW) form a helical membrane-spanning segment. Residues 572-585 (KIRIVDILEFNESK) lie on the Cytoplasmic side of the membrane. The helical transmembrane segment at 586 to 606 (AIANTLYAISFCLFVIVPLMI) threads the bilayer. Residues 607–615 (SPQDKQSEK) are Extracellular-facing. The chain crosses the membrane as a helical span at residues 616–636 (IILCIAGLFIVTAAVLIIFVP). Topologically, residues 637-791 (KFYRVYIFGS…KNEENNDGDN (155 aa)) are cytoplasmic. Disordered stretches follow at residues 664–715 (TARA…SEPN) and 746–791 (IITE…DGDN). The span at 674–689 (SSGGGAGSGGATGGSG) shows a compositional bias: gly residues. A compositionally biased stretch (low complexity) spans 749-760 (ENGQDSNNNNNN). Residues 752–781 (QDSNNNNNNEENKDNNIENNKISEEIKENL) are a coiled coil. Positions 761–785 (EENKDNNIENNKISEEIKENLKNEE) are enriched in basic and acidic residues.

It in the N-terminal section; belongs to the BMP lipoprotein family. The protein in the C-terminal section; belongs to the G-protein coupled receptor 3 family. GABA-B receptor subfamily.

It is found in the membrane. The sequence is that of Metabotropic glutamate receptor-like protein D (grlD) from Dictyostelium discoideum (Social amoeba).